Consider the following 232-residue polypeptide: Cytochrome c oxidase subunit 2 (232 aa).

At 1 to 30 the chain is on the mitochondrial intermembrane side; that stretch reads MNNFFQDFNLLFSSSLFSSYMDWFYNFNCS. The helical transmembrane segment at 31–52 threads the bilayer; the sequence is LLFGVLSFVSTMFVYLLLSSFY. Residues 53-69 lie on the Mitochondrial matrix side of the membrane; it reads FKSKKIEYQFGELLCSV. The chain crosses the membrane as a helical span at residues 70-89; it reads FPTLILVMQMVPSLSLLYYY. The Mitochondrial intermembrane portion of the chain corresponds to 90–232; sequence GLMNLDSSLT…KSWCVGLLSD (143 aa). Cu cation contacts are provided by His164, Cys199, Glu201, Cys203, His207, and Met210. Glu201 lines the Mg(2+) pocket.

It belongs to the cytochrome c oxidase subunit 2 family. Component of the cytochrome c oxidase (complex IV, CIV), a multisubunit enzyme composed of a catalytic core of 3 subunits and several supernumerary subunits. The complex exists as a monomer or a dimer and forms supercomplexes (SCs) in the inner mitochondrial membrane with ubiquinol-cytochrome c oxidoreductase (cytochrome b-c1 complex, complex III, CIII). Requires Cu cation as cofactor.

It localises to the mitochondrion inner membrane. The catalysed reaction is 4 Fe(II)-[cytochrome c] + O2 + 8 H(+)(in) = 4 Fe(III)-[cytochrome c] + 2 H2O + 4 H(+)(out). Component of the cytochrome c oxidase, the last enzyme in the mitochondrial electron transport chain which drives oxidative phosphorylation. The respiratory chain contains 3 multisubunit complexes succinate dehydrogenase (complex II, CII), ubiquinol-cytochrome c oxidoreductase (cytochrome b-c1 complex, complex III, CIII) and cytochrome c oxidase (complex IV, CIV), that cooperate to transfer electrons derived from NADH and succinate to molecular oxygen, creating an electrochemical gradient over the inner membrane that drives transmembrane transport and the ATP synthase. Cytochrome c oxidase is the component of the respiratory chain that catalyzes the reduction of oxygen to water. Electrons originating from reduced cytochrome c in the intermembrane space (IMS) are transferred via the dinuclear copper A center (CU(A)) of subunit 2 and heme A of subunit 1 to the active site in subunit 1, a binuclear center (BNC) formed by heme A3 and copper B (CU(B)). The BNC reduces molecular oxygen to 2 water molecules using 4 electrons from cytochrome c in the IMS and 4 protons from the mitochondrial matrix. The chain is Cytochrome c oxidase subunit 2 (COII) from Ascaris suum (Pig roundworm).